A 252-amino-acid chain; its full sequence is Homeobox protein EMX2 (252 aa).

The segment at residues 154–213 (PKRIRTAFSPSQLLRLEHAFEKNHYVVGAERKQLAHSLSLTETQVKVWFQNRRTKFKRQK) is a DNA-binding region (homeobox). The segment at 212 to 252 (QKLEEEGSDSQQKKKGTHHINRWRIATKQASPEEIDVTSDD) is disordered. The span at 224–233 (KKKGTHHINR) shows a compositional bias: basic residues.

It belongs to the EMX homeobox family. Interacts with translation initiation factor EIF4E. Cerebral cortex.

It localises to the nucleus. It is found in the cell projection. The protein localises to the axon. In terms of biological role, transcription factor, which in cooperation with EMX1, acts to generate the boundary between the roof and archipallium in the developing brain. May function in combination with OTX1/2 to specify cell fates in the developing central nervous system. In the inner ear, it controls the distribution of GPR156 at hair cell boundaries, and regulates the organization of stereociliary bundles in opposite orientations across the line of polarity reversal (LPR). This chain is Homeobox protein EMX2 (EMX2), found in Homo sapiens (Human).